The primary structure comprises 20 residues: Cytochrome c oxidase subunit 6A2, mitochondrial (20 aa).

Residues 1 to 20 form a disordered region; sequence ASGAKGDHGGAGASTXXLLT.

This sequence belongs to the cytochrome c oxidase subunit 6A family. As to quaternary structure, component of the cytochrome c oxidase (complex IV, CIV), a multisubunit enzyme composed of 14 subunits. The complex is composed of a catalytic core of 3 subunits MT-CO1, MT-CO2 and MT-CO3, encoded in the mitochondrial DNA, and 11 supernumerary subunits COX4I, COX5A, COX5B, COX6A, COX6B, COX6C, COX7A, COX7B, COX7C, COX8 and NDUFA4, which are encoded in the nuclear genome. The complex exists as a monomer or a dimer and forms supercomplexes (SCs) in the inner mitochondrial membrane with NADH-ubiquinone oxidoreductase (complex I, CI) and ubiquinol-cytochrome c oxidoreductase (cytochrome b-c1 complex, complex III, CIII), resulting in different assemblies (supercomplex SCI(1)III(2)IV(1) and megacomplex MCI(2)III(2)IV(2)). As to expression, heart specific isoform.

The protein resides in the mitochondrion inner membrane. Its pathway is energy metabolism; oxidative phosphorylation. Functionally, component of the cytochrome c oxidase, the last enzyme in the mitochondrial electron transport chain which drives oxidative phosphorylation. The respiratory chain contains 3 multisubunit complexes succinate dehydrogenase (complex II, CII), ubiquinol-cytochrome c oxidoreductase (cytochrome b-c1 complex, complex III, CIII) and cytochrome c oxidase (complex IV, CIV), that cooperate to transfer electrons derived from NADH and succinate to molecular oxygen, creating an electrochemical gradient over the inner membrane that drives transmembrane transport and the ATP synthase. Cytochrome c oxidase is the component of the respiratory chain that catalyzes the reduction of oxygen to water. Electrons originating from reduced cytochrome c in the intermembrane space (IMS) are transferred via the dinuclear copper A center (CU(A)) of subunit 2 and heme A of subunit 1 to the active site in subunit 1, a binuclear center (BNC) formed by heme A3 and copper B (CU(B)). The BNC reduces molecular oxygen to 2 water molecules unsing 4 electrons from cytochrome c in the IMS and 4 protons from the mitochondrial matrix. Plays a role in the assembly and stabilization of complex IV. This chain is Cytochrome c oxidase subunit 6A2, mitochondrial (COX6A2), found in Canis lupus familiaris (Dog).